A 137-amino-acid chain; its full sequence is Small ribosomal subunit protein bS16m (137 aa).

Residues 1 to 34 (MVHLTTLLCKAYRGGHLTIRLALGGCTNRPFYRI) constitute a mitochondrion transit peptide. Threonine 130 is subject to Phosphothreonine.

Belongs to the bacterial ribosomal protein bS16 family. Component of the mitochondrial small ribosomal subunit (mt-SSU). Mature mammalian 55S mitochondrial ribosomes consist of a small (28S) and a large (39S) subunit. The 28S small subunit contains a 12S ribosomal RNA (12S mt-rRNA) and 30 different proteins. The 39S large subunit contains a 16S rRNA (16S mt-rRNA), a copy of mitochondrial valine transfer RNA (mt-tRNA(Val)), which plays an integral structural role, and 52 different proteins. bS16m has a zinc binding site.

Its subcellular location is the mitochondrion. The chain is Small ribosomal subunit protein bS16m (MRPS16) from Homo sapiens (Human).